Consider the following 92-residue polypeptide: YcgL domain-containing protein ASA_2166 (92 aa).

Residues 1-85 (MLCAVYKSRK…PPENLLEQHK (85 aa)) enclose the YcgL domain.

The chain is YcgL domain-containing protein ASA_2166 from Aeromonas salmonicida (strain A449).